The sequence spans 322 residues: MVGSGAAGSASSLQGNGSNSSGLKSLLRSAPVSVPPSSTSNQTLSLSNPAPVGPQAVVSQPAGGATAAVSVNRTASDTATFSKYLNTAQALHQMGVIVPGLEKWGGNNGTGVVASRRDATSTNLPHAAGASQTGLGTGSPREPALTATSQRAVTVVAGPLRAGNSSETDALPNVITQLYHTSTAQLAYLNGQIVVMSSARVPSLWYWVVGEDQESGKATWWAKTELNWGTDKQKQFVENQLGFKDDSNSDSKNSNLKTQGLTQPAYLIAGLDVVADHLVFAAFKAGAVGYDMTTDSNASTYNQALVWSTTAGLDSDGGTRLW.

A compositionally biased stretch (low complexity) spans 1 to 48 (MVGSGAAGSASSLQGNGSNSSGLKSLLRSAPVSVPPSSTSNQTLSLSN). 2 disordered regions span residues 1-59 (MVGS…AVVS) and 118-145 (DATS…EPAL). The span at 120–134 (TSTNLPHAAGASQTG) shows a compositional bias: polar residues.

This sequence belongs to the MgpC family.

The chain is Putative MgpC-like protein MPN_367 from Mycoplasma pneumoniae (strain ATCC 29342 / M129 / Subtype 1) (Mycoplasmoides pneumoniae).